A 413-amino-acid chain; its full sequence is MSSYALPSMQPTPTSSIPLRQMSQPTTSAPSNSASSTPYSPQQVPLTHNSYPLSTPSSFQHGQTRLPPINCLAEPFNRPQPWHSNSAAPASSSPTSATLSTAAHPVHTNAAQVAGSSSSYVYSVPPTNSTTSQASAKHSAVPHRSSQFQSTTLTPSTTDSSSTDVSSSDSVSTSASSSNASNTVSVTSPASSSATPLPNQPSQQQFLVSKNDAFTTFVHSVHNTPMQQSMYVPQQQTSHSSGASYQNESANPPVQSPMQYSYSQGQPFSYPQHKNQSFSASPIDPSMSYVYRAPESFSSINANVPYGRNEYLRRVTSLVPNQPEYTGPYTRNPELRTSHKLAERKRRKEIKELFDDLKDALPLDKSTKSSKWGLLTRAIQYIEQLKSEQVALEAYVKSLEENMQSNKEVTKGT.

Polar residues predominate over residues 1-22 (MSSYALPSMQPTPTSSIPLRQM). 2 disordered regions span residues 1–202 (MSSY…NQPS) and 230–265 (MYVP…YSQG). The span at 23–42 (SQPTTSAPSNSASSTPYSPQ) shows a compositional bias: low complexity. Positions 43–63 (QVPLTHNSYPLSTPSSFQHGQ) are enriched in polar residues. Low complexity-rich tracts occupy residues 86–103 (SAAP…STAA) and 116–126 (SSSSYVYSVPP). Residues 127–136 (TNSTTSQASA) are compositionally biased toward polar residues. Residues 150–197 (STTLTPSTTDSSSTDVSSSDSVSTSASSSNASNTVSVTSPASSSATPL) are compositionally biased toward low complexity. Residues 334-385 (ELRTSHKLAERKRRKEIKELFDDLKDALPLDKSTKSSKWGLLTRAIQYIEQL) enclose the bHLH domain.

As to quaternary structure, efficient DNA binding requires dimerization with another bHLH protein.

Its subcellular location is the nucleus. Functionally, involved in the sexual differentiation process. Modulate the ability of the cell to differentiate in response to the nitrogen starvation signal; in particular in response to decreases in the level of cellular cAMP. The protein is Protein esc1 (esc1) of Schizosaccharomyces pombe (strain 972 / ATCC 24843) (Fission yeast).